The primary structure comprises 317 residues: MRDMMIQSKKIALIGSGNIGGMIAYLIRLKNLGDVVLLDINDGMAKGKALDIAESSPIGKYNGEIFGTNNYADIENADAIIVTAGITRKPGMSRDDLISTNVNIIKEIATNIAKYAPNAFVIVVTNPLDVMVLAMYRYSHLPSNMIVGMAGVLDSARFSYFIAKELNVSVESVDSLVLGGHGDIMLPLIRYSSVSGVSIADLIKLGMITHDKVTEIVERTRKGGEEIVSLLKTGSAYYAPAESAVLMLDSYLNDKKLMLPCSAYLKGEYGVHDLFVGVPIIIGKNGVEKIVELQLTEEENSIFNNSVALIQNLVANI.

NAD(+) is bound by residues 15-20 (GSGNIG) and Asp-39. Positions 88 and 94 each coordinate substrate. NAD(+) contacts are provided by residues Asn-101 and 124-126 (VTN). Substrate is bound by residues Asn-126 and Arg-157. His-181 (proton acceptor) is an active-site residue.

It belongs to the LDH/MDH superfamily. MDH type 3 family.

It carries out the reaction (S)-malate + NAD(+) = oxaloacetate + NADH + H(+). Functionally, catalyzes the reversible oxidation of malate to oxaloacetate. In Ehrlichia ruminantium (strain Gardel), this protein is Malate dehydrogenase.